The chain runs to 382 residues: Lipid-A-disaccharide synthase (382 aa).

It belongs to the LpxB family.

It carries out the reaction 2-N,3-O-bis[(3R)-3-hydroxytetradecanoyl]-alpha-D-glucosaminyl 1-phosphate + UDP-2-N,3-O-bis[(3R)-3-hydroxytetradecanoyl]-alpha-D-glucosamine = lipid A disaccharide (E. coli) + UDP + H(+). It catalyses the reaction a lipid X + a UDP-2-N,3-O-bis[(3R)-3-hydroxyacyl]-alpha-D-glucosamine = a lipid A disaccharide + UDP + H(+). It participates in glycolipid biosynthesis; lipid IV(A) biosynthesis; lipid IV(A) from (3R)-3-hydroxytetradecanoyl-[acyl-carrier-protein] and UDP-N-acetyl-alpha-D-glucosamine: step 5/6. In terms of biological role, condensation of UDP-2,3-diacylglucosamine and 2,3-diacylglucosamine-1-phosphate to form lipid A disaccharide, a precursor of lipid A, a phosphorylated glycolipid that anchors the lipopolysaccharide to the outer membrane of the cell. The chain is Lipid-A-disaccharide synthase from Escherichia coli (strain ATCC 8739 / DSM 1576 / NBRC 3972 / NCIMB 8545 / WDCM 00012 / Crooks).